The primary structure comprises 358 residues: Glutamine synthetase (358 aa).

The GS beta-grasp domain maps to 26-105 (ILAEYIWIDG…VLAECWNADG (80 aa)). Positions 112–358 (HRHECAKIME…IMMETICGGI (247 aa)) constitute a GS catalytic domain.

Belongs to the glutamine synthetase family. In terms of assembly, homooctamer.

The protein localises to the cytoplasm. It catalyses the reaction L-glutamate + NH4(+) + ATP = L-glutamine + ADP + phosphate + H(+). The polypeptide is Glutamine synthetase (GLN1) (Tuber borchii (White truffle)).